Here is a 194-residue protein sequence, read N- to C-terminus: Fe/S biogenesis protein NfuA (194 aa).

Residues C151 and C154 each coordinate [4Fe-4S] cluster.

It belongs to the NfuA family. As to quaternary structure, homodimer. [4Fe-4S] cluster is required as a cofactor.

Its function is as follows. Involved in iron-sulfur cluster biogenesis. Binds a 4Fe-4S cluster, can transfer this cluster to apoproteins, and thereby intervenes in the maturation of Fe/S proteins. Could also act as a scaffold/chaperone for damaged Fe/S proteins. The chain is Fe/S biogenesis protein NfuA from Mannheimia succiniciproducens (strain KCTC 0769BP / MBEL55E).